The sequence spans 84 residues: uncharacterized protein (84 aa).

This is an uncharacterized protein from Methanocaldococcus jannaschii (strain ATCC 43067 / DSM 2661 / JAL-1 / JCM 10045 / NBRC 100440) (Methanococcus jannaschii).